Reading from the N-terminus, the 335-residue chain is Solute-binding protein Veis_3954 (335 aa).

Residues 1 to 34 form the signal peptide; it reads MPSTRPLPRPSSRSLRRLALGLGLAFGLGATAAA. Residues Gln50, Glu82, 155–158, Arg179, and Asn219 each bind (R)-pantoate; that span reads NGFR.

Belongs to the bacterial solute-binding protein 7 family. As to quaternary structure, the complex is comprised of an extracytoplasmic solute-binding protein and a heteromeric permease formed by two transmembrane proteins.

It localises to the periplasm. In terms of biological role, solute-binding protein that binds (R)-pantoate and D-erythronate (in vitro). Probably part of a tripartite ATP-independent periplasmic (TRAP) transport system that mediates solute transport into the cytoplasm. The sequence is that of Solute-binding protein Veis_3954 from Verminephrobacter eiseniae (strain EF01-2).